Here is a 511-residue protein sequence, read N- to C-terminus: Maturase K (511 aa).

This sequence belongs to the intron maturase 2 family. MatK subfamily.

The protein localises to the plastid. Its subcellular location is the chloroplast. In terms of biological role, usually encoded in the trnK tRNA gene intron. Probably assists in splicing its own and other chloroplast group II introns. The sequence is that of Maturase K from Pistia stratiotes (Water lettuce).